A 557-amino-acid chain; its full sequence is Arginine--tRNA ligase (557 aa).

Residues 128-138 carry the 'HIGH' region motif; sequence ANPTGPLHVGH.

Belongs to the class-I aminoacyl-tRNA synthetase family. In terms of assembly, monomer.

It is found in the cytoplasm. The enzyme catalyses tRNA(Arg) + L-arginine + ATP = L-arginyl-tRNA(Arg) + AMP + diphosphate. The protein is Arginine--tRNA ligase of Thiobacillus denitrificans (strain ATCC 25259 / T1).